A 449-amino-acid chain; its full sequence is Glutamate--tRNA ligase (449 aa).

The 'HIGH' region motif lies at 10–20 (PSPTGHLHIGN). Positions 214 to 218 (KLSKR) match the 'KMSKS' region motif. Residue Lys-217 coordinates ATP.

Belongs to the class-I aminoacyl-tRNA synthetase family. Glutamate--tRNA ligase type 1 subfamily. In terms of assembly, monomer.

Its subcellular location is the cytoplasm. It catalyses the reaction tRNA(Glu) + L-glutamate + ATP = L-glutamyl-tRNA(Glu) + AMP + diphosphate. In terms of biological role, catalyzes the attachment of glutamate to tRNA(Glu) in a two-step reaction: glutamate is first activated by ATP to form Glu-AMP and then transferred to the acceptor end of tRNA(Glu). The sequence is that of Glutamate--tRNA ligase from Acholeplasma laidlawii (strain PG-8A).